The sequence spans 355 residues: Peptide chain release factor 1 (355 aa).

Position 232 is an N5-methylglutamine (Gln232). The disordered stretch occupies residues 282–309 (EQNASISAERKSQVGSGDRSERIRTYNY). Positions 289-305 (AERKSQVGSGDRSERIR) are enriched in basic and acidic residues.

This sequence belongs to the prokaryotic/mitochondrial release factor family. Methylated by PrmC. Methylation increases the termination efficiency of RF1.

It is found in the cytoplasm. In terms of biological role, peptide chain release factor 1 directs the termination of translation in response to the peptide chain termination codons UAG and UAA. This Desulfatibacillum aliphaticivorans protein is Peptide chain release factor 1.